The following is a 561-amino-acid chain: Foot protein 1 variant 1 (561 aa).

A signal peptide spans 1–20 (MARNMNILTLFAVLIGSASA). Residue Tyr-22 is modified to 3',4'-dihydroxyphenylalanine. Pro-33 is modified (4-hydroxyproline). One copy of the A-1; approximate repeat lies at 41 to 50 (VHPPAWTAWK). The 13 X 10 AA A-P-P-P-A-W-T-A-W-K stretch occupies residues 41–410 (VHPPAWTAWK…APPPAWTAWK (370 aa)). Trp-46, Trp-49, Trp-56, and Trp-59 each carry 7'-hydroxytryptophan. C-linked (Man) hydroxytryptophan glycosylation is found at Trp-46, Trp-49, Trp-56, and Trp-59. Residues 51 to 60 (AHPPAWTAWK) form an A-2; approximate repeat. One copy of the B-1 repeat lies at 61–70 (ATPKPWTAWK). The segment at 61–440 (ATPKPWTAWK…ATPKPWTAWR (380 aa)) is 27 X 10 AA A-T-P-K-P-W-T-A-W-K. Pro-65 is modified (4-hydroxyproline). Trp-66 is a glycosylation site (C-linked (Man) tryptophan). Position 69 is a 7'-hydroxytryptophan (Trp-69). Trp-69 carries C-linked (Man) hydroxytryptophan glycosylation. Residues 71–80 (APPPAWTAWK) form an A-3 repeat. 4-hydroxyproline is present on residues Pro-72, Pro-73, and Pro-74. Trp-76 and Trp-79 each carry 7'-hydroxytryptophan. C-linked (Man) hydroxytryptophan glycans are attached at residues Trp-76 and Trp-79. The B-2 repeat unit spans residues 81–90 (ATPKPWTAWK). A 4-hydroxyproline modification is found at Pro-85. C-linked (Man) tryptophan glycosylation is present at Trp-86. Trp-89 carries the 7'-hydroxytryptophan modification. C-linked (Man) hydroxytryptophan glycosylation occurs at Trp-89. The stretch at 91 to 100 (APPPTWTAWK) is one A-4; approximate repeat. Pro-92, Pro-93, and Pro-94 each carry 4-hydroxyproline. Trp-96 and Trp-99 each carry 7'-hydroxytryptophan. Trp-96 and Trp-99 each carry a C-linked (Man) hydroxytryptophan glycan. The B-3 repeat unit spans residues 101–110 (ATPKPWTAWK). Pro-105 is modified (4-hydroxyproline). Residue Trp-106 is glycosylated (C-linked (Man) tryptophan). Residue Trp-109 is modified to 7'-hydroxytryptophan. Residue Trp-109 is glycosylated (C-linked (Man) hydroxytryptophan). One copy of the A-5 repeat lies at 111–120 (APPPAWTAWK). A 4-hydroxyproline mark is found at Pro-112, Pro-113, and Pro-114. Trp-116 and Trp-119 each carry 7'-hydroxytryptophan. C-linked (Man) hydroxytryptophan glycans are attached at residues Trp-116 and Trp-119. A B-4; approximate repeat occupies 121 to 130 (ATLKPWTAWK). Pro-125 is modified (4-hydroxyproline). Trp-126 carries a C-linked (Man) tryptophan glycan. Trp-129 is subject to 7'-hydroxytryptophan. Residue Trp-129 is glycosylated (C-linked (Man) hydroxytryptophan). A B-5 repeat occupies 131–140 (ATPKPWTAWK). A 4-hydroxyproline modification is found at Pro-135. Trp-136 carries C-linked (Man) tryptophan glycosylation. Trp-139 carries the 7'-hydroxytryptophan modification. A glycan (C-linked (Man) hydroxytryptophan) is linked at Trp-139. The B-6 repeat unit spans residues 141-150 (ATPKPWTAWK). Pro-145 is subject to 4-hydroxyproline. The C-linked (Man) tryptophan glycan is linked to Trp-146. The residue at position 149 (Trp-149) is a 7'-hydroxytryptophan. The C-linked (Man) hydroxytryptophan glycan is linked to Trp-149. A B-7 repeat occupies 151-160 (ATPKPWTAWK). Pro-155 carries the post-translational modification 4-hydroxyproline. Residue Trp-156 is glycosylated (C-linked (Man) tryptophan). A 7'-hydroxytryptophan modification is found at Trp-159. C-linked (Man) hydroxytryptophan glycosylation is present at Trp-159. A B-8 repeat occupies 161–170 (ATPKPWTAWK). Pro-165 carries the 4-hydroxyproline modification. Trp-166 is a glycosylation site (C-linked (Man) tryptophan). Position 169 is a 7'-hydroxytryptophan (Trp-169). Trp-169 carries C-linked (Man) hydroxytryptophan glycosylation. One copy of the B-9; approximate repeat lies at 171–180 (ATPKPWTVWK). The residue at position 175 (Pro-175) is a 4-hydroxyproline. Trp-176 is a glycosylation site (C-linked (Man) tryptophan). A 7'-hydroxytryptophan modification is found at Trp-179. Trp-179 carries a C-linked (Man) hydroxytryptophan glycan. One copy of the B-10 repeat lies at 181 to 190 (ATPKPWTAWK). Pro-185 bears the 4-hydroxyproline mark. C-linked (Man) tryptophan glycosylation is present at Trp-186. Residue Trp-189 is modified to 7'-hydroxytryptophan. C-linked (Man) hydroxytryptophan glycosylation is present at Trp-189. One copy of the B-11 repeat lies at 191-200 (ATPKPWTAWK). Pro-195 is subject to 4-hydroxyproline. Trp-196 carries C-linked (Man) tryptophan glycosylation. Residue Trp-199 is modified to 7'-hydroxytryptophan. Trp-199 carries a C-linked (Man) hydroxytryptophan glycan. The A-6; approximate repeat unit spans residues 201 to 210 (APPPAWSAWK). 4-hydroxyproline is present on residues Pro-202, Pro-203, and Pro-204. Residues Trp-206 and Trp-209 each carry the 7'-hydroxytryptophan modification. Trp-206 and Trp-209 each carry a C-linked (Man) hydroxytryptophan glycan. The stretch at 211-220 (ATPKPWTVWK) is one B-12; approximate repeat. Position 215 is a 4-hydroxyproline (Pro-215). C-linked (Man) tryptophan glycosylation is present at Trp-216. Trp-219 carries the 7'-hydroxytryptophan modification. A C-linked (Man) hydroxytryptophan glycan is attached at Trp-219. A B-13 repeat occupies 221–230 (ATPKPWTAWK). At Pro-225 the chain carries 4-hydroxyproline. C-linked (Man) tryptophan glycosylation is present at Trp-226. Trp-229 is subject to 7'-hydroxytryptophan. A glycan (C-linked (Man) hydroxytryptophan) is linked at Trp-229. The B-14 repeat unit spans residues 231 to 240 (ATPKPWTAWK). 4-hydroxyproline is present on Pro-235. A glycan (C-linked (Man) tryptophan) is linked at Trp-236. The residue at position 239 (Trp-239) is a 7'-hydroxytryptophan. C-linked (Man) hydroxytryptophan glycosylation occurs at Trp-239. The stretch at 241–250 (ATPKPWTVWK) is one B-15; approximate repeat. 4-hydroxyproline is present on Pro-245. C-linked (Man) tryptophan glycosylation occurs at Trp-246. Position 249 is a 7'-hydroxytryptophan (Trp-249). C-linked (Man) hydroxytryptophan glycosylation is present at Trp-249. One copy of the B-16 repeat lies at 251–260 (ATPKPWTAWK). Residue Pro-255 is modified to 4-hydroxyproline. The C-linked (Man) tryptophan glycan is linked to Trp-256. Trp-259 carries the 7'-hydroxytryptophan modification. C-linked (Man) hydroxytryptophan glycosylation is present at Trp-259. The A-7 repeat unit spans residues 261 to 270 (APPPAWTAWK). 3 positions are modified to 4-hydroxyproline: Pro-262, Pro-263, and Pro-264. 7'-hydroxytryptophan occurs at positions 266 and 269. Residues Trp-266 and Trp-269 are each glycosylated (C-linked (Man) hydroxytryptophan). One copy of the B-17 repeat lies at 271 to 280 (ATPKPWTAWK). At Pro-275 the chain carries 4-hydroxyproline. Trp-276 is a glycosylation site (C-linked (Man) tryptophan). Trp-279 is subject to 7'-hydroxytryptophan. Trp-279 carries C-linked (Man) hydroxytryptophan glycosylation. The stretch at 281 to 290 (APPPTWTAWK) is one A-8; approximate repeat. 3 positions are modified to 4-hydroxyproline: Pro-282, Pro-283, and Pro-284. Residues Trp-286 and Trp-289 each carry the 7'-hydroxytryptophan modification. 2 C-linked (Man) hydroxytryptophan glycosylation sites follow: Trp-286 and Trp-289. Residues 291–300 (ATPKPWTAWK) form a B-18 repeat. 4-hydroxyproline is present on Pro-295. A glycan (C-linked (Man) tryptophan) is linked at Trp-296. At Trp-299 the chain carries 7'-hydroxytryptophan. Residue Trp-299 is glycosylated (C-linked (Man) hydroxytryptophan). The stretch at 301 to 310 (APPPAWSAWK) is one A-9; approximate repeat. A 4-hydroxyproline mark is found at Pro-302, Pro-303, and Pro-304. Residues Trp-306 and Trp-309 each carry the 7'-hydroxytryptophan modification. Residues Trp-306 and Trp-309 are each glycosylated (C-linked (Man) hydroxytryptophan). One copy of the B-19 repeat lies at 311 to 320 (ATPKPWTAWK). Pro-315 carries the 4-hydroxyproline modification. The C-linked (Man) tryptophan glycan is linked to Trp-316. Trp-319 bears the 7'-hydroxytryptophan mark. Trp-319 is a glycosylation site (C-linked (Man) hydroxytryptophan). One copy of the B-20 repeat lies at 321 to 330 (ATPKPWTAWK). Residue Pro-325 is modified to 4-hydroxyproline. The C-linked (Man) tryptophan glycan is linked to Trp-326. Trp-329 carries the 7'-hydroxytryptophan modification. The C-linked (Man) hydroxytryptophan glycan is linked to Trp-329. A B-21 repeat occupies 331-340 (ATPKPWTAWK). 4-hydroxyproline is present on Pro-335. A C-linked (Man) tryptophan glycan is attached at Trp-336. Trp-339 carries the post-translational modification 7'-hydroxytryptophan. A glycan (C-linked (Man) hydroxytryptophan) is linked at Trp-339. The B-22 repeat unit spans residues 341 to 350 (ATPKPWTAWK). At Pro-345 the chain carries 4-hydroxyproline. Trp-346 is a glycosylation site (C-linked (Man) tryptophan). The residue at position 349 (Trp-349) is a 7'-hydroxytryptophan. Trp-349 carries C-linked (Man) hydroxytryptophan glycosylation. An A-10; approximate repeat occupies 351 to 360 (VPPPAWTAWK). Residues Pro-352, Pro-353, and Pro-354 each carry the 4-hydroxyproline modification. 7'-hydroxytryptophan is present on residues Trp-356, Trp-359, Trp-366, and Trp-369. Trp-356, Trp-359, Trp-366, and Trp-369 each carry a C-linked (Man) hydroxytryptophan glycan. One copy of the A-11; approximate repeat lies at 361 to 370 (AHPPAWTAWK). The B-23 repeat unit spans residues 371–380 (ATPKPWTAWK). Pro-375 carries the 4-hydroxyproline modification. The C-linked (Man) tryptophan glycan is linked to Trp-376. Trp-379 is modified (7'-hydroxytryptophan). C-linked (Man) hydroxytryptophan glycosylation is present at Trp-379. Residues 381–390 (APPPAWTAWK) form an A-12 repeat. Residues Pro-382, Pro-383, and Pro-384 each carry the 4-hydroxyproline modification. Residues Trp-386 and Trp-389 each carry the 7'-hydroxytryptophan modification. Trp-386 and Trp-389 each carry a C-linked (Man) hydroxytryptophan glycan. A B-24 repeat occupies 391–400 (ATPKPWTAWK). Pro-395 carries the 4-hydroxyproline modification. Trp-396 is a glycosylation site (C-linked (Man) tryptophan). The residue at position 399 (Trp-399) is a 7'-hydroxytryptophan. A C-linked (Man) hydroxytryptophan glycan is attached at Trp-399. An A-13 repeat occupies 401–410 (APPPAWTAWK). 4-hydroxyproline is present on residues Pro-402, Pro-403, and Pro-404. Trp-406 and Trp-409 each carry 7'-hydroxytryptophan. C-linked (Man) hydroxytryptophan glycans are attached at residues Trp-406 and Trp-409. The B-25 repeat unit spans residues 411-420 (ATPKPWTAWK). Pro-415 carries the post-translational modification 4-hydroxyproline. A glycan (C-linked (Man) tryptophan) is linked at Trp-416. Residue Trp-419 is modified to 7'-hydroxytryptophan. Residue Trp-419 is glycosylated (C-linked (Man) hydroxytryptophan). One copy of the B-26; approximate repeat lies at 421–430 (ATPKPWTVWK). Residue Pro-425 is modified to 4-hydroxyproline. Trp-426 carries a C-linked (Man) tryptophan glycan. Trp-429 carries the 7'-hydroxytryptophan modification. C-linked (Man) hydroxytryptophan glycosylation occurs at Trp-429. The B-27; approximate repeat unit spans residues 431–440 (ATPKPWTAWR). Pro-435 bears the 4-hydroxyproline mark. Residue Trp-436 is glycosylated (C-linked (Man) tryptophan). Trp-439 carries the 7'-hydroxytryptophan modification. Trp-439 carries a C-linked (Man) hydroxytryptophan glycan. The disordered stretch occupies residues 452–507 (GHGYGGYGKPGKPGKPGSKGPRGPAGPPGATGKTGRTGATGKRGPPGYPGKPGVPG). Residues 453-462 (HGYGGYGKPG) show a composition bias toward gly residues. The Collagen-like domain occupies 459-510 (GKPGKPGKPGSKGPRGPAGPPGATGKTGRTGATGKRGPPGYPGKPGVPGRNG). A compositionally biased stretch (low complexity) spans 466–496 (KPGSKGPRGPAGPPGATGKTGRTGATGKRGP). Pro-497, Pro-500, and Pro-506 each carry 4-hydroxyproline.

As to expression, produced by the byssal gland.

It localises to the secreted. Functionally, provides adhesiveness to the mussel's foot. Mussels produce one of the strongest water insoluble glues. The mussel's adhesive is a bundle of threads, called a byssus, formed by a fibrous collagenous core coated with adhesive proteins. The polypeptide is Foot protein 1 variant 1 (Perna viridis (Asian green mussel)).